Consider the following 198-residue polypeptide: Na(+)-translocating NADH-quinone reductase subunit E (198 aa).

A run of 6 helical transmembrane segments spans residues 11 to 31 (SIFI…FLAV), 35 to 55 (VSTA…AVPA), 77 to 97 (FLNF…LEMI), 110 to 130 (GIFL…SFMV), 140 to 160 (VVYG…LAGI), and 176 to 196 (LGIT…FSGI).

Belongs to the NqrDE/RnfAE family. As to quaternary structure, composed of six subunits; NqrA, NqrB, NqrC, NqrD, NqrE and NqrF.

The protein localises to the cell inner membrane. The catalysed reaction is a ubiquinone + n Na(+)(in) + NADH + H(+) = a ubiquinol + n Na(+)(out) + NAD(+). Its function is as follows. NQR complex catalyzes the reduction of ubiquinone-1 to ubiquinol by two successive reactions, coupled with the transport of Na(+) ions from the cytoplasm to the periplasm. NqrA to NqrE are probably involved in the second step, the conversion of ubisemiquinone to ubiquinol. The polypeptide is Na(+)-translocating NADH-quinone reductase subunit E (Glaesserella parasuis serovar 5 (strain SH0165) (Haemophilus parasuis)).